Reading from the N-terminus, the 219-residue chain is Protein Ac132 (219 aa).

A disordered region spans residues 1–34 (MSDKTPTKKGGSHAMTLRERGVTKPPKKSEKLQQ). Residues 16–33 (TLRERGVTKPPKKSEKLQ) are compositionally biased toward basic and acidic residues. Residues 103 to 134 (YPMAYFVNTDYKLKLECARIRSDLLYKNKNEV) form an NEBU-like domain region.

In terms of assembly, interacts with viral envelope protein E18 and the DNA-binding protein p6.9.

It is found in the host cytoplasm. The protein resides in the host nucleus. Its subcellular location is the virion. Functionally, plays an essential role in nucleocapsid entry in host nucleus. May act by binding and stabilizing F-actin in the infected cell, which might attach to nucleocapsids and then push the nucleocapsids into the nucleus. The sequence is that of Protein Ac132 (Ac132) from Autographa californica nuclear polyhedrosis virus (AcMNPV).